A 448-amino-acid polypeptide reads, in one-letter code: Tubulin beta-1 chain (448 aa).

Residues Q11, E69, S138, G142, T143, G144, N204, and N226 each coordinate GTP. E69 lines the Mg(2+) pocket. Residues 428 to 448 form a disordered region; the sequence is AGIGDDEEEDEEGVMGEEIDA. Residues 430 to 448 show a composition bias toward acidic residues; sequence IGDDEEEDEEGVMGEEIDA.

It belongs to the tubulin family. As to quaternary structure, dimer of alpha and beta chains. A typical microtubule is a hollow water-filled tube with an outer diameter of 25 nm and an inner diameter of 15 nM. Alpha-beta heterodimers associate head-to-tail to form protofilaments running lengthwise along the microtubule wall with the beta-tubulin subunit facing the microtubule plus end conferring a structural polarity. Microtubules usually have 13 protofilaments but different protofilament numbers can be found in some organisms and specialized cells. Requires Mg(2+) as cofactor.

It is found in the cytoplasm. The protein localises to the cytoskeleton. Its function is as follows. Tubulin is the major constituent of microtubules, a cylinder consisting of laterally associated linear protofilaments composed of alpha- and beta-tubulin heterodimers. Microtubules grow by the addition of GTP-tubulin dimers to the microtubule end, where a stabilizing cap forms. Below the cap, tubulin dimers are in GDP-bound state, owing to GTPase activity of alpha-tubulin. The protein is Tubulin beta-1 chain (TUB-1) of Echinococcus multilocularis (Fox tapeworm).